A 294-amino-acid polypeptide reads, in one-letter code: 4-hydroxy-tetrahydrodipicolinate synthase (294 aa).

Residue Thr45 coordinates pyruvate. Residue Tyr133 is the Proton donor/acceptor of the active site. The active-site Schiff-base intermediate with substrate is Lys161. Ile203 is a pyruvate binding site.

It belongs to the DapA family. As to quaternary structure, homotetramer; dimer of dimers.

It is found in the cytoplasm. The enzyme catalyses L-aspartate 4-semialdehyde + pyruvate = (2S,4S)-4-hydroxy-2,3,4,5-tetrahydrodipicolinate + H2O + H(+). It functions in the pathway amino-acid biosynthesis; L-lysine biosynthesis via DAP pathway; (S)-tetrahydrodipicolinate from L-aspartate: step 3/4. Catalyzes the condensation of (S)-aspartate-beta-semialdehyde [(S)-ASA] and pyruvate to 4-hydroxy-tetrahydrodipicolinate (HTPA). The polypeptide is 4-hydroxy-tetrahydrodipicolinate synthase (Thioalkalivibrio sulfidiphilus (strain HL-EbGR7)).